Consider the following 504-residue polypeptide: Maturase K (504 aa).

Belongs to the intron maturase 2 family. MatK subfamily.

It is found in the plastid. It localises to the chloroplast. Functionally, usually encoded in the trnK tRNA gene intron. Probably assists in splicing its own and other chloroplast group II introns. This chain is Maturase K, found in Pseudoturritis turrita (Tower rock-cress).